The primary structure comprises 631 residues: tRNA uridine 5-carboxymethylaminomethyl modification enzyme MnmG (631 aa).

An FAD-binding site is contributed by 15-20; that stretch reads GAGHAG. Residues 214–233 form a disordered region; that stretch reads YSKTEEEPGDKEPRHFSFTS. Position 276-290 (276-290) interacts with NAD(+); the sequence is GPRYCPSIETKVVRF.

It belongs to the MnmG family. Homodimer. Heterotetramer of two MnmE and two MnmG subunits. FAD is required as a cofactor.

It localises to the cytoplasm. Its function is as follows. NAD-binding protein involved in the addition of a carboxymethylaminomethyl (cmnm) group at the wobble position (U34) of certain tRNAs, forming tRNA-cmnm(5)s(2)U34. In Lactobacillus delbrueckii subsp. bulgaricus (strain ATCC 11842 / DSM 20081 / BCRC 10696 / JCM 1002 / NBRC 13953 / NCIMB 11778 / NCTC 12712 / WDCM 00102 / Lb 14), this protein is tRNA uridine 5-carboxymethylaminomethyl modification enzyme MnmG.